The following is a 231-amino-acid chain: Octanoyl-[acyl-carrier-protein]:protein N-octanoyltransferase LIPT2, mitochondrial (231 aa).

A mitochondrion-targeting transit peptide spans 1-31; that stretch reads MRQPAVRLVRLGRVPYAELLGLQDRWLRRLQ. Residues 41-224 enclose the BPL/LPL catalytic domain; sequence GTEAGALLLC…AFKEIYKCTL (184 aa). Residues 85 to 92, 154 to 156, and 167 to 169 contribute to the substrate site; these read RGGLATFH, AIG, and GLA. Catalysis depends on Cys-185, which acts as the Acyl-thioester intermediate.

The protein belongs to the LipB family.

Its subcellular location is the mitochondrion. The enzyme catalyses octanoyl-[ACP] + L-lysyl-[protein] = N(6)-octanoyl-L-lysyl-[protein] + holo-[ACP] + H(+). It participates in protein modification; protein lipoylation via endogenous pathway; protein N(6)-(lipoyl)lysine from octanoyl-[acyl-carrier-protein]: step 1/2. Its function is as follows. Catalyzes the transfer of endogenously produced octanoic acid from octanoyl-acyl-carrier-protein (octanoyl-ACP) onto the lipoyl domains of lipoate-dependent enzymes such as the protein H of the glycine cleavage system (GCSH). Lipoyl-ACP can also act as a substrate although octanoyl-ACP is likely to be the physiological substrate. The sequence is that of Octanoyl-[acyl-carrier-protein]:protein N-octanoyltransferase LIPT2, mitochondrial from Homo sapiens (Human).